The chain runs to 203 residues: Proteasome subunit beta 2 (203 aa).

A propeptide spans 1-9 (MGEEVQIGA) (removed in mature form; by autocatalysis). Threonine 10 functions as the Nucleophile in the catalytic mechanism.

This sequence belongs to the peptidase T1B family. As to quaternary structure, the 20S proteasome core is composed of 14 alpha and 14 beta subunits that assemble into four stacked heptameric rings, resulting in a barrel-shaped structure. The two inner rings, each composed of seven catalytic beta subunits, are sandwiched by two outer rings, each composed of seven alpha subunits. The catalytic chamber with the active sites is on the inside of the barrel. Has a gated structure, the ends of the cylinder being occluded by the N-termini of the alpha-subunits. Is capped at one or both ends by the proteasome regulatory ATPase, PAN.

The protein localises to the cytoplasm. The catalysed reaction is Cleavage of peptide bonds with very broad specificity.. Its activity is regulated as follows. The formation of the proteasomal ATPase PAN-20S proteasome complex, via the docking of the C-termini of PAN into the intersubunit pockets in the alpha-rings, triggers opening of the gate for substrate entry. Interconversion between the open-gate and close-gate conformations leads to a dynamic regulation of the 20S proteasome proteolysis activity. Component of the proteasome core, a large protease complex with broad specificity involved in protein degradation. The protein is Proteasome subunit beta 2 of Pyrobaculum arsenaticum (strain DSM 13514 / JCM 11321 / PZ6).